The chain runs to 364 residues: Mannose-1-phosphate guanyltransferase (364 aa).

It belongs to the transferase hexapeptide repeat family.

It is found in the cytoplasm. It catalyses the reaction alpha-D-mannose 1-phosphate + GTP + H(+) = GDP-alpha-D-mannose + diphosphate. The protein operates within nucleotide-sugar biosynthesis; GDP-alpha-D-mannose biosynthesis; GDP-alpha-D-mannose from alpha-D-mannose 1-phosphate (GTP route): step 1/1. Involved in cell wall synthesis where it is required for glycosylation. Involved in cell cycle progression through cell-size checkpoint. This Neurospora crassa (strain ATCC 24698 / 74-OR23-1A / CBS 708.71 / DSM 1257 / FGSC 987) protein is Mannose-1-phosphate guanyltransferase (mpg-1).